The following is a 470-amino-acid chain: Nuclear receptor ROR-beta (470 aa).

The nuclear receptor DNA-binding region spans 18 to 93; the sequence is VIPCKICGDK…LGMSRDAVKF (76 aa). 2 NR C4-type zinc fingers span residues 21–41 and 57–81; these read CKIC…CEGC and CPRQ…LQKC. The segment covering 104-117 has biased composition (basic and acidic residues); the sequence is LYAEVQKHQQRLQE. The tract at residues 104–127 is disordered; sequence LYAEVQKHQQRLQEQRQQQSGEAE. Positions 222 to 460 constitute an NR LBD domain; that stretch reads EIDRIAQNII…TLFPPLYKEL (239 aa). The AF-2 motif lies at 456–461; the sequence is LYKELF.

Belongs to the nuclear hormone receptor family. NR1 subfamily. In terms of assembly, monomer. Interacts with CRX. As to expression, isoform 2 expressed with circadian rhythm in eye and pineal gland. Isoform 1 expressed in retina cortex, thalamus, and hypothalamus.

The protein resides in the nucleus. The protein localises to the nucleoplasm. Functionally, nuclear receptor that binds DNA as a monomer to ROR response elements (RORE) containing a single core motif half-site 5'-AGGTCA-3' preceded by a short A-T-rich sequence. Considered to have intrinsic transcriptional activity, have some natural ligands such as all-trans retinoic acid (ATRA) and other retinoids which act as inverse agonists repressing the transcriptional activity. Required for normal postnatal development of rod and cone photoreceptor cells. Modulates rod photoreceptors differentiation at least by inducing the transcription factor NRL-mediated pathway. In cone photoreceptor cells, regulates transcription of OPN1SW. Involved in the regulation of the period length and stability of the circadian rhythm. May control cytoarchitectural patterning of neocortical neurons during development. May act in a dose-dependent manner to regulate barrel formation upon innervation of layer IV neurons by thalamocortical axons. May play a role in the suppression of osteoblastic differentiation through the inhibition of RUNX2 transcriptional activity. Its function is as follows. Critical for hindlimb motor control and for the differentiation of amacrine and horizontal cells in the retina. Regulates the expression of PTF1A synergistically with FOXN4. This is Nuclear receptor ROR-beta (Rorb) from Rattus norvegicus (Rat).